We begin with the raw amino-acid sequence, 213 residues long: Vacuolar protein sorting-associated protein 32 homolog 1 (213 aa).

Coiled-coil stretches lie at residues 11 to 42 and 118 to 176; these read KQETSTLQTLDKLNETLEMLEKKENVLLKKAT and TNID…QLLQ. A disordered region spans residues 180–213; it reads IHVPQGNKPARAPAQKQPTAEEDELAALQAEMAL.

The protein belongs to the SNF7 family. In terms of assembly, component of the endosomal sorting required for transport complex III (ESCRT-III), composed at least of VPS2, VPS20, VPS24 and VPS32. Interacts with SKD1. Interacts with BRO1/ALIX.

It is found in the endosome. Component of the ESCRT-III complex, which is required for multivesicular bodies (MVBs) formation and sorting of endosomal cargo proteins into MVBs. The ESCRT-III complex is probably involved in the concentration of MVB cargo. The protein is Vacuolar protein sorting-associated protein 32 homolog 1 (VPS32.1) of Arabidopsis thaliana (Mouse-ear cress).